The sequence spans 363 residues: Pyrimidine monooxygenase RutA (363 aa).

FMN-binding positions include 49–50 (IK), Asn115, Glu124, 140–141 (RY), and Ser190.

The protein belongs to the NtaA/SnaA/DszA monooxygenase family. RutA subfamily.

It catalyses the reaction uracil + FMNH2 + NADH + O2 = (Z)-3-ureidoacrylate + FMN + NAD(+) + H2O + H(+). The catalysed reaction is thymine + FMNH2 + NADH + O2 = (Z)-2-methylureidoacrylate + FMN + NAD(+) + H2O + H(+). Its function is as follows. Catalyzes the pyrimidine ring opening between N-3 and C-4 by an unusual flavin hydroperoxide-catalyzed mechanism, adding oxygen atoms in the process to yield ureidoacrylate peracid, that immediately reacts with FMN forming ureidoacrylate and FMN-N(5)-oxide. The FMN-N(5)-oxide reacts spontaneously with NADH to produce FMN. Requires the flavin reductase RutF to regenerate FMN in vivo. The sequence is that of Pyrimidine monooxygenase RutA from Escherichia coli O127:H6 (strain E2348/69 / EPEC).